Here is a 344-residue protein sequence, read N- to C-terminus: AI-2 transport protein TqsA (344 aa).

The Cytoplasmic segment spans residues 1–4 (MAKP). The chain crosses the membrane as a helical span at residues 5–25 (IITLNGLKIVIMLGMLVIILC). Over 26 to 30 (GIRFA) the chain is Periplasmic. Residues 31 to 51 (AEIIVPFILALFIAVILNPLV) traverse the membrane as a helical segment. At 52–61 (QHMVRWRVPR) the chain is on the cytoplasmic side. Residues 62 to 82 (VLAVSILMTIIVMAMVLLLAY) traverse the membrane as a helical segment. Topologically, residues 83–149 (LGSALNELTR…LLTQLSNAMS (67 aa)) are periplasmic. The chain crosses the membrane as a helical span at residues 150–170 (SIFLLLLTVLFMLLEVPQLPG). Over 171–196 (KFQQMMARPVEGMAAIQRAIDSVSHY) the chain is Cytoplasmic. Residues 197–217 (LVLKTAISIITGLVAWAMLAA) traverse the membrane as a helical segment. At 218 to 221 (LDVR) the chain is on the periplasmic side. The helical transmembrane segment at 222–242 (FAFVWGLLAFALNYIPNIGSV) threads the bilayer. Over 243-257 (LAAIPPIAQVLVFNG) the chain is Cytoplasmic. The chain crosses the membrane as a helical span at residues 258-278 (FYEALLVLAGYLLINLVFGNI). Over 279–292 (LEPRIMGRGLGLST) the chain is Periplasmic. A helical transmembrane segment spans residues 293-313 (LVVFLSLIFWGWLLGPVGMLL). Topologically, residues 314-344 (SVPLTIIVKIALEQTAGGQSIAVLLSDLNKE) are cytoplasmic.

This sequence belongs to the autoinducer-2 exporter (AI-2E) (TC 2.A.86) family.

The protein resides in the cell inner membrane. It carries out the reaction (2R,4S)-2-methyltetrahydrofuran-2,3,3,4-tetrol(in) = (2R,4S)-2-methyltetrahydrofuran-2,3,3,4-tetrol(out). In terms of biological role, involved in the transport of the quorum-sensing signal autoinducer 2 (AI-2). Controls the transport of AI-2 either by enhancing its secretion or inhibiting its uptake and consequently represses biofilm formation and motility and affects the global gene expression in biofilms. The chain is AI-2 transport protein TqsA from Escherichia coli (strain K12).